Here is a 304-residue protein sequence, read N- to C-terminus: HPr kinase/phosphorylase (304 aa).

Catalysis depends on residues histidine 136 and lysine 157. Residue 151–158 (GESGIGKS) coordinates ATP. Residue serine 158 participates in Mg(2+) binding. Aspartate 175 acts as the Proton acceptor; for phosphorylation activity. Proton donor; for dephosphorylation activity in catalysis. Residues 198 to 207 (LEVRGIGIID) are important for the catalytic mechanism of both phosphorylation and dephosphorylation. Position 199 (glutamate 199) interacts with Mg(2+). Arginine 240 is an active-site residue. An important for the catalytic mechanism of dephosphorylation region spans residues 261 to 266 (PVRPGR).

Belongs to the HPrK/P family. Homohexamer. It depends on Mg(2+) as a cofactor.

It catalyses the reaction [HPr protein]-L-serine + ATP = [HPr protein]-O-phospho-L-serine + ADP + H(+). The catalysed reaction is [HPr protein]-O-phospho-L-serine + phosphate + H(+) = [HPr protein]-L-serine + diphosphate. In terms of biological role, catalyzes the ATP- as well as the pyrophosphate-dependent phosphorylation of a specific serine residue in HPr, a phosphocarrier protein of the phosphoenolpyruvate-dependent sugar phosphotransferase system (PTS). HprK/P also catalyzes the pyrophosphate-producing, inorganic phosphate-dependent dephosphorylation (phosphorolysis) of seryl-phosphorylated HPr (P-Ser-HPr). The two antagonistic activities of HprK/P are regulated by several intracellular metabolites, which change their concentration in response to the absence or presence of rapidly metabolisable carbon sources (glucose, fructose, etc.) in the growth medium. Therefore, by controlling the phosphorylation state of HPr, HPrK/P is a sensor enzyme that plays a major role in the regulation of carbon metabolism and sugar transport: it mediates carbon catabolite repression (CCR), and regulates PTS-catalyzed carbohydrate uptake and inducer exclusion. The chain is HPr kinase/phosphorylase from Clostridium botulinum (strain Alaska E43 / Type E3).